The primary structure comprises 338 residues: Ketol-acid reductoisomerase (NADP(+)) (338 aa).

The KARI N-terminal Rossmann domain maps to 1-181; that stretch reads MKVYYDKDAD…GGTRGGVIET (181 aa). NADP(+)-binding positions include 24–27, R47, and S52; that span reads YGSQ. Residue H107 is part of the active site. NADP(+) is bound at residue G133. The region spanning 182–327 is the KARI C-terminal knotted domain; sequence TFKEETETDL…SRLRDMMPWI (146 aa). Mg(2+) contacts are provided by D190, E194, E226, and E230. S251 contributes to the substrate binding site.

It belongs to the ketol-acid reductoisomerase family. It depends on Mg(2+) as a cofactor.

The catalysed reaction is (2R)-2,3-dihydroxy-3-methylbutanoate + NADP(+) = (2S)-2-acetolactate + NADPH + H(+). It carries out the reaction (2R,3R)-2,3-dihydroxy-3-methylpentanoate + NADP(+) = (S)-2-ethyl-2-hydroxy-3-oxobutanoate + NADPH + H(+). It functions in the pathway amino-acid biosynthesis; L-isoleucine biosynthesis; L-isoleucine from 2-oxobutanoate: step 2/4. The protein operates within amino-acid biosynthesis; L-valine biosynthesis; L-valine from pyruvate: step 2/4. Its function is as follows. Involved in the biosynthesis of branched-chain amino acids (BCAA). Catalyzes an alkyl-migration followed by a ketol-acid reduction of (S)-2-acetolactate (S2AL) to yield (R)-2,3-dihydroxy-isovalerate. In the isomerase reaction, S2AL is rearranged via a Mg-dependent methyl migration to produce 3-hydroxy-3-methyl-2-ketobutyrate (HMKB). In the reductase reaction, this 2-ketoacid undergoes a metal-dependent reduction by NADPH to yield (R)-2,3-dihydroxy-isovalerate. This Nitrosomonas eutropha (strain DSM 101675 / C91 / Nm57) protein is Ketol-acid reductoisomerase (NADP(+)).